The primary structure comprises 159 residues: MNISIITVGKLKEKYLKQGIAEYTKRLSAYAKVQEIEVSDEKAPEHLSEADMLLVKQKEGERILAKISPDTHVIALAIKGKQRTSEEFARELDQLATYGKSKIAFVIGGSLGLSDDVMKRADDTISFSKMTFPHQLMKLVLCEQIYRAYRINRNEPYHK.

Residues Leu76, Gly108, and 127 to 132 (FSKMTF) each bind S-adenosyl-L-methionine.

Belongs to the RNA methyltransferase RlmH family. Homodimer.

The protein localises to the cytoplasm. It catalyses the reaction pseudouridine(1915) in 23S rRNA + S-adenosyl-L-methionine = N(3)-methylpseudouridine(1915) in 23S rRNA + S-adenosyl-L-homocysteine + H(+). Specifically methylates the pseudouridine at position 1915 (m3Psi1915) in 23S rRNA. In Exiguobacterium sp. (strain ATCC BAA-1283 / AT1b), this protein is Ribosomal RNA large subunit methyltransferase H.